Consider the following 407-residue polypeptide: uncharacterized protein (407 aa).

Disordered regions lie at residues 73-93 (SPHS…VHGG) and 116-202 (SGSI…IKPS). A run of 5 repeats spans residues 112–116 (GSIRS), 117–121 (GSIRS), 122–126 (GSIRN), 127–131 (GSIRS), and 132–136 (GSVRD). The segment at 112-136 (GSIRSGSIRSGSIRNGSIRSGSVRD) is 5 X 5 AA tandem repeats of G-[S]-[IV]-R-[DNS]. Positions 116–132 (SGSIRSGSIRNGSIRSG) are enriched in low complexity. The segment covering 187-202 (NHYAESEYSEKSIKPS) has biased composition (basic and acidic residues).

It belongs to the asfivirus B407L family.

This is an uncharacterized protein from Ornithodoros (relapsing fever ticks).